Here is a 90-residue protein sequence, read N- to C-terminus: Secretoglobin family 1D member 1 (90 aa).

The N-terminal stretch at 1–21 (MRLSVCLLLLTLALCCYRANA) is a signal peptide.

Heterodimer of a lipophilin A and a lipophilin C (mammaglobin B) monomer associated head to head. As to expression, expressed in lachrymal gland, thymus, kidney, testis, ovary and salivary gland.

The protein resides in the secreted. May bind androgens and other steroids, may also bind estramustine, a chemotherapeutic agent used for prostate cancer. May be under transcriptional regulation of steroid hormones. The protein is Secretoglobin family 1D member 1 (SCGB1D1) of Homo sapiens (Human).